Reading from the N-terminus, the 1755-residue chain is Transposon Ty1-DR5 Gag-Pol polyprotein (1755 aa).

Composition is skewed to polar residues over residues 1-10, 48-60, and 127-152; these read MESQQLSNYP, TKANSQQTTTPAS, and QSQFPQYPSSVGTPLSTPSPESGNTF. 3 disordered regions span residues 1-93, 126-173, and 352-421; these read MESQ…MMTQ, PQSQ…RPPP, and GSRN…SKST. The span at 153-165 shows a compositional bias: low complexity; that stretch reads TDSSSADSDMTST. Residues 299-401 form an RNA-binding region; sequence NNGIHINNKV…NSKSKTARAH (103 aa). Residues 402-418 show a composition bias toward low complexity; it reads NVSTSNNSPSTDNDSIS. Residue D461 is the For protease activity; shared with dimeric partner of the active site. The segment at 583-640 is integrase-type zinc finger-like; it reads NVHTSESTRKYPYPFIHRMLAHANAQTIRYSLKNNTITYFNESDVDWSSAIDYQCPDC. The Integrase catalytic domain maps to 660–835; sequence NSYEPFQYLH…AGLDISTLLP (176 aa). Mg(2+) contacts are provided by D671 and D736. Disordered regions lie at residues 956-1087, 1092-1111, and 1130-1187; these read SKAV…ETEK, RSPSIDASPPENNSSHNIVP, and DLPL…DNET. Over residues 960 to 969 the composition is skewed to low complexity; it reads SPTDSTPPST. A compositionally biased stretch (polar residues) spans 1005–1015; sequence STPQISNIEST. Over residues 1038 to 1053 the composition is skewed to basic and acidic residues; sequence ESSHASKSKDFRHSDS. Polar residues-rich tracts occupy residues 1054-1082 and 1101-1111; these read YSENETNHTNVPISSTGGTNNKTVPQISD and PENNSSHNIVP. Residues 1178-1212 carry the Bipartite nuclear localization signal motif; it reads KKRSLEDNETEIKVSRDTWNTKNMRSLEPPRSKKR. A Reverse transcriptase Ty1/copia-type domain is found at 1338–1476; it reads NNYYITQLDI…DILGLEIKYQ (139 aa). The Mg(2+) site is built by D1346, D1427, D1428, D1610, E1652, and D1685. The RNase H Ty1/copia-type domain maps to 1610–1752; that stretch reads DASYGNQPYY…IKTFKLLTNK (143 aa).

The capsid protein forms a homotrimer, from which the VLPs are assembled. The protease is a homodimer, whose active site consists of two apposed aspartic acid residues. Post-translationally, initially, virus-like particles (VLPs) are composed of the structural unprocessed proteins Gag and Gag-Pol, and also contain the host initiator methionine tRNA (tRNA(i)-Met) which serves as a primer for minus-strand DNA synthesis, and a dimer of genomic Ty RNA. Processing of the polyproteins occurs within the particle and proceeds by an ordered pathway, called maturation. First, the protease (PR) is released by autocatalytic cleavage of the Gag-Pol polyprotein yielding capsid protein p45 and a Pol-p154 precursor protein. This cleavage is a prerequisite for subsequent processing of Pol-p154 at the remaining sites to release the mature structural and catalytic proteins. Maturation takes place prior to the RT reaction and is required to produce transposition-competent VLPs.

The protein resides in the cytoplasm. It is found in the nucleus. The catalysed reaction is DNA(n) + a 2'-deoxyribonucleoside 5'-triphosphate = DNA(n+1) + diphosphate. The enzyme catalyses Endonucleolytic cleavage to 5'-phosphomonoester.. Its function is as follows. Capsid protein (CA) is the structural component of the virus-like particle (VLP), forming the shell that encapsulates the retrotransposons dimeric RNA genome. The particles are assembled from trimer-clustered units and there are holes in the capsid shells that allow for the diffusion of macromolecules. CA also has nucleocapsid-like chaperone activity, promoting primer tRNA(i)-Met annealing to the multipartite primer-binding site (PBS), dimerization of Ty1 RNA and initiation of reverse transcription. The aspartyl protease (PR) mediates the proteolytic cleavages of the Gag and Gag-Pol polyproteins after assembly of the VLP. In terms of biological role, reverse transcriptase/ribonuclease H (RT) is a multifunctional enzyme that catalyzes the conversion of the retro-elements RNA genome into dsDNA within the VLP. The enzyme displays a DNA polymerase activity that can copy either DNA or RNA templates, and a ribonuclease H (RNase H) activity that cleaves the RNA strand of RNA-DNA heteroduplexes during plus-strand synthesis and hydrolyzes RNA primers. The conversion leads to a linear dsDNA copy of the retrotransposon that includes long terminal repeats (LTRs) at both ends. Functionally, integrase (IN) targets the VLP to the nucleus, where a subparticle preintegration complex (PIC) containing at least integrase and the newly synthesized dsDNA copy of the retrotransposon must transit the nuclear membrane. Once in the nucleus, integrase performs the integration of the dsDNA into the host genome. This is Transposon Ty1-DR5 Gag-Pol polyprotein (TY1B-DR5) from Saccharomyces cerevisiae (strain ATCC 204508 / S288c) (Baker's yeast).